The following is a 295-amino-acid chain: Transmembrane protein 71 (295 aa).

Transmembrane regions (helical) follow at residues 229–249 and 253–273; these read LLQEVFFQAILLAVCLIISAC and FMGEILASVFTCSLMITVAYV.

The protein belongs to the TMEM71 family.

Its subcellular location is the membrane. The polypeptide is Transmembrane protein 71 (TMEM71) (Homo sapiens (Human)).